We begin with the raw amino-acid sequence, 416 residues long: Serine hydroxymethyltransferase (416 aa).

(6S)-5,6,7,8-tetrahydrofolate-binding positions include Leu118 and 122–124 (GHL). At Lys226 the chain carries N6-(pyridoxal phosphate)lysine. (6S)-5,6,7,8-tetrahydrofolate is bound by residues Glu242 and 350–352 (SPF).

This sequence belongs to the SHMT family. Homodimer. Requires pyridoxal 5'-phosphate as cofactor.

Its subcellular location is the cytoplasm. It catalyses the reaction (6R)-5,10-methylene-5,6,7,8-tetrahydrofolate + glycine + H2O = (6S)-5,6,7,8-tetrahydrofolate + L-serine. Its pathway is one-carbon metabolism; tetrahydrofolate interconversion. It functions in the pathway amino-acid biosynthesis; glycine biosynthesis; glycine from L-serine: step 1/1. Catalyzes the reversible interconversion of serine and glycine with tetrahydrofolate (THF) serving as the one-carbon carrier. This reaction serves as the major source of one-carbon groups required for the biosynthesis of purines, thymidylate, methionine, and other important biomolecules. Also exhibits THF-independent aldolase activity toward beta-hydroxyamino acids, producing glycine and aldehydes, via a retro-aldol mechanism. This is Serine hydroxymethyltransferase from Helicobacter pylori (strain Shi470).